We begin with the raw amino-acid sequence, 207 residues long: Large ribosomal subunit protein uL4 (207 aa).

The tract at residues 49-78 (HAVKNRSAVSGGGRKPWRQKGTGRARQGSI) is disordered.

This sequence belongs to the universal ribosomal protein uL4 family. As to quaternary structure, part of the 50S ribosomal subunit.

Functionally, one of the primary rRNA binding proteins, this protein initially binds near the 5'-end of the 23S rRNA. It is important during the early stages of 50S assembly. It makes multiple contacts with different domains of the 23S rRNA in the assembled 50S subunit and ribosome. In terms of biological role, forms part of the polypeptide exit tunnel. This is Large ribosomal subunit protein uL4 from Streptococcus agalactiae serotype Ia (strain ATCC 27591 / A909 / CDC SS700).